The chain runs to 96 residues: Putative pterin-4-alpha-carbinolamine dehydratase (96 aa).

Belongs to the pterin-4-alpha-carbinolamine dehydratase family.

It catalyses the reaction (4aS,6R)-4a-hydroxy-L-erythro-5,6,7,8-tetrahydrobiopterin = (6R)-L-erythro-6,7-dihydrobiopterin + H2O. This is Putative pterin-4-alpha-carbinolamine dehydratase from Rhodospirillum rubrum (strain ATCC 11170 / ATH 1.1.1 / DSM 467 / LMG 4362 / NCIMB 8255 / S1).